Reading from the N-terminus, the 77-residue chain is Small ribosomal subunit protein uS17 (77 aa).

This sequence belongs to the universal ribosomal protein uS17 family. Part of the 30S ribosomal subunit.

Its function is as follows. One of the primary rRNA binding proteins, it binds specifically to the 5'-end of 16S ribosomal RNA. In Rickettsia conorii (strain ATCC VR-613 / Malish 7), this protein is Small ribosomal subunit protein uS17.